Here is a 178-residue protein sequence, read N- to C-terminus: uncharacterized protein (178 aa).

A compositionally biased stretch (basic and acidic residues) spans Met1–Pro16. The segment at Met1–Pro43 is disordered.

This is an uncharacterized protein from Homo sapiens (Human).